Here is a 325-residue protein sequence, read N- to C-terminus: Glycerol-3-phosphate dehydrogenase [NAD(P)+] (325 aa).

NADPH is bound by residues Trp-11, Arg-30, and Lys-103. The sn-glycerol 3-phosphate site is built by Lys-103, Gly-131, and Ser-133. Position 135 (Ala-135) interacts with NADPH. Sn-glycerol 3-phosphate is bound by residues Lys-186, Asp-242, Ser-252, Arg-253, and Asn-254. Lys-186 serves as the catalytic Proton acceptor. Arg-253 serves as a coordination point for NADPH. Residues Val-279 and Glu-281 each coordinate NADPH.

This sequence belongs to the NAD-dependent glycerol-3-phosphate dehydrogenase family.

The protein resides in the cytoplasm. It catalyses the reaction sn-glycerol 3-phosphate + NAD(+) = dihydroxyacetone phosphate + NADH + H(+). The catalysed reaction is sn-glycerol 3-phosphate + NADP(+) = dihydroxyacetone phosphate + NADPH + H(+). The protein operates within membrane lipid metabolism; glycerophospholipid metabolism. In terms of biological role, catalyzes the reduction of the glycolytic intermediate dihydroxyacetone phosphate (DHAP) to sn-glycerol 3-phosphate (G3P), the key precursor for phospholipid synthesis. In Wolbachia pipientis subsp. Culex pipiens (strain wPip), this protein is Glycerol-3-phosphate dehydrogenase [NAD(P)+].